The primary structure comprises 264 residues: NADH-quinone oxidoreductase subunit B 1 (264 aa).

Residues Cys-42, Cys-43, Cys-108, and Cys-138 each contribute to the [4Fe-4S] cluster site.

It belongs to the complex I 20 kDa subunit family. In terms of assembly, NDH-1 is composed of 14 different subunits. Subunits NuoB, C, D, E, F, and G constitute the peripheral sector of the complex. [4Fe-4S] cluster serves as cofactor.

It is found in the cell membrane. It catalyses the reaction a quinone + NADH + 5 H(+)(in) = a quinol + NAD(+) + 4 H(+)(out). Its function is as follows. NDH-1 shuttles electrons from NADH, via FMN and iron-sulfur (Fe-S) centers, to quinones in the respiratory chain. The immediate electron acceptor for the enzyme in this species is believed to be ubiquinone. Couples the redox reaction to proton translocation (for every two electrons transferred, four hydrogen ions are translocated across the cytoplasmic membrane), and thus conserves the redox energy in a proton gradient. In Chloroflexus aurantiacus (strain ATCC 29366 / DSM 635 / J-10-fl), this protein is NADH-quinone oxidoreductase subunit B 1.